The chain runs to 197 residues: Chaperone protein dnaJ 20, chloroplastic (197 aa).

The transit peptide at 1–60 directs the protein to the chloroplast; it reads MKCYKSSSILSTNHHPFFYKQQPISSLQPTSIPTTISYPTRTRFSSTRIQSRLTHDDPVK. The J domain occupies 66–133; sequence SFYDLLGVTE…RRRVLYDRDL (68 aa). A disordered region spans residues 169 to 197; that stretch reads SGLRRRSNQKDNNTMSWAARMRRQQQESS.

Belongs to the DnaJ family. C/III subfamily. As to expression, light-grown seedlings.

Its subcellular location is the plastid. The protein localises to the chloroplast. Functionally, plays a continuous role in plant development probably in the structural organization of compartments. This chain is Chaperone protein dnaJ 20, chloroplastic (ATJ20), found in Arabidopsis thaliana (Mouse-ear cress).